We begin with the raw amino-acid sequence, 147 residues long: Large ribosomal subunit protein uL15 (147 aa).

It belongs to the universal ribosomal protein uL15 family. Part of the 50S ribosomal subunit.

Binds to the 23S rRNA. This chain is Large ribosomal subunit protein uL15, found in Blochmanniella floridana.